Here is a 424-residue protein sequence, read N- to C-terminus: Tyrosine--tRNA ligase (424 aa).

Position 37 (tyrosine 37) interacts with L-tyrosine. The 'HIGH' region signature appears at 42–51; the sequence is PTADSLHLGH. Lysine 144 carries the N6-acetyllysine modification. L-tyrosine is bound by residues tyrosine 175 and glutamine 179. A 'KMSKS' region motif is present at residues 235 to 239; sequence KFGKT. Lysine 238 contacts ATP. The S4 RNA-binding domain maps to 357–414; sequence ADLMQALVDSELQPSRGQARKTIASNAITINGEKQSDPEYFFKEEDRLFGRFTLLRRG.

This sequence belongs to the class-I aminoacyl-tRNA synthetase family. TyrS type 1 subfamily. In terms of assembly, homodimer.

The protein resides in the cytoplasm. It catalyses the reaction tRNA(Tyr) + L-tyrosine + ATP = L-tyrosyl-tRNA(Tyr) + AMP + diphosphate + H(+). Its function is as follows. Catalyzes the attachment of tyrosine to tRNA(Tyr) in a two-step reaction: tyrosine is first activated by ATP to form Tyr-AMP and then transferred to the acceptor end of tRNA(Tyr). In Escherichia coli (strain K12 / DH10B), this protein is Tyrosine--tRNA ligase.